The sequence spans 490 residues: Cytochrome P450 90D2 (490 aa).

A helical membrane pass occupies residues 4-24 (AAAGWAAPAFAVAAVVIWVVL). Cys-437 is a heme binding site.

This sequence belongs to the cytochrome P450 family. It depends on heme as a cofactor.

It is found in the membrane. The enzyme catalyses 6-deoxoteasterone + reduced [NADPH--hemoprotein reductase] + O2 = 3-dehydro-6-deoxoteasterone + oxidized [NADPH--hemoprotein reductase] + 2 H2O + H(+). Its pathway is plant hormone biosynthesis; brassinosteroid biosynthesis. Functionally, catalyzes the C6-oxidation step in brassinosteroids biosynthesis. May convert 6-deoxoteasterone (6-deoxoTE) to 3-dehydro-6-deoxoteasterone (6-deoxo3DT, 6-deoxo3DHT), and teasterone (TE) to 3-dehydroteasterone (3DT, 3-DHT). Involved in the elongation of leaf sheaths and stems. This Oryza sativa subsp. indica (Rice) protein is Cytochrome P450 90D2.